Reading from the N-terminus, the 299-residue chain is Oxygen-dependent coproporphyrinogen-III oxidase (299 aa).

Serine 92 is a substrate binding site. A divalent metal cation contacts are provided by histidine 96 and histidine 106. The active-site Proton donor is histidine 106. 108 to 110 (NVR) contacts substrate. The a divalent metal cation site is built by histidine 145 and histidine 175. The important for dimerization stretch occupies residues 240-275 (YVEFNLVWDRGTLFGLQTGGRTESILMSMPPLVRWE). 258–260 (GGR) is a substrate binding site.

Belongs to the aerobic coproporphyrinogen-III oxidase family. As to quaternary structure, homodimer. Requires a divalent metal cation as cofactor.

The protein localises to the cytoplasm. The enzyme catalyses coproporphyrinogen III + O2 + 2 H(+) = protoporphyrinogen IX + 2 CO2 + 2 H2O. It participates in porphyrin-containing compound metabolism; protoporphyrin-IX biosynthesis; protoporphyrinogen-IX from coproporphyrinogen-III (O2 route): step 1/1. In terms of biological role, involved in the heme biosynthesis. Catalyzes the aerobic oxidative decarboxylation of propionate groups of rings A and B of coproporphyrinogen-III to yield the vinyl groups in protoporphyrinogen-IX. This chain is Oxygen-dependent coproporphyrinogen-III oxidase, found in Enterobacter sp. (strain 638).